Here is a 236-residue protein sequence, read N- to C-terminus: Purine nucleoside phosphorylase DeoD-type (236 aa).

H5 is a binding site for a purine D-ribonucleoside. Phosphate contacts are provided by residues G21, R25, R44, and 88-91 (RVGT). Residues 180-182 (EME) and 204-205 (SD) contribute to the a purine D-ribonucleoside site. The active-site Proton donor is D205.

It belongs to the PNP/UDP phosphorylase family. In terms of assembly, homohexamer; trimer of homodimers.

It carries out the reaction a purine D-ribonucleoside + phosphate = a purine nucleobase + alpha-D-ribose 1-phosphate. It catalyses the reaction a purine 2'-deoxy-D-ribonucleoside + phosphate = a purine nucleobase + 2-deoxy-alpha-D-ribose 1-phosphate. In terms of biological role, catalyzes the reversible phosphorolytic breakdown of the N-glycosidic bond in the beta-(deoxy)ribonucleoside molecules, with the formation of the corresponding free purine bases and pentose-1-phosphate. This Shewanella frigidimarina (strain NCIMB 400) protein is Purine nucleoside phosphorylase DeoD-type.